A 467-amino-acid chain; its full sequence is F-box/kelch-repeat protein SKIP11 (467 aa).

The segment at L77–L117 is disordered. Positions S92–S111 are enriched in low complexity. Residues S116 to Q163 form the F-box domain. 5 Kelch repeats span residues R159 to L210, D215 to E259, A261 to G307, K308 to P356, and A365 to F411.

As to quaternary structure, part of a SCF (ASK-cullin-F-box) protein ligase complex. Interacts with SKP1A/ASK1 and SPK1B/ASK2.

It is found in the nucleus. It participates in protein modification; protein ubiquitination. In terms of biological role, component of SCF(ASK-cullin-F-box) E3 ubiquitin ligase complexes, which may mediate the ubiquitination and subsequent proteasomal degradation of target proteins. The sequence is that of F-box/kelch-repeat protein SKIP11 (SKIP11) from Arabidopsis thaliana (Mouse-ear cress).